We begin with the raw amino-acid sequence, 351 residues long: Photosystem II D2 protein (351 aa).

A helical membrane pass occupies residues 39 to 59; that stretch reads CAFLALGGWLTGTTFVTSWYT. His-116 lines the chlorophyll a pocket. Residues 123 to 139 traverse the membrane as a helical segment; that stretch reads GFMLRQFEIARLVGIRP. Pheophytin a contacts are provided by Gln-128 and Asn-141. A helical transmembrane segment spans residues 151–164; the sequence is VFVSVFLMYPLGQS. His-196 contributes to the chlorophyll a binding site. The chain crosses the membrane as a helical span at residues 206 to 226; that stretch reads GALLCAIHGATVENTLFEDGD. A plastoquinone contacts are provided by His-213 and Phe-260. His-213 serves as a coordination point for Fe cation. Residue His-267 participates in Fe cation binding. A helical transmembrane segment spans residues 277–293; it reads GLWMSAVGIVGLALNLR.

This sequence belongs to the reaction center PufL/M/PsbA/D family. As to quaternary structure, PSII is composed of 1 copy each of membrane proteins PsbA, PsbB, PsbC, PsbD, PsbE, PsbF, PsbH, PsbI, PsbJ, PsbK, PsbL, PsbM, PsbT, PsbX, PsbY, PsbZ, Psb30/Ycf12, peripheral proteins PsbO, CyanoQ (PsbQ), PsbU, PsbV and a large number of cofactors. It forms dimeric complexes. Requires The D1/D2 heterodimer binds P680, chlorophylls that are the primary electron donor of PSII, and subsequent electron acceptors. It shares a non-heme iron and each subunit binds pheophytin, quinone, additional chlorophylls, carotenoids and lipids. There is also a Cl(-1) ion associated with D1 and D2, which is required for oxygen evolution. The PSII complex binds additional chlorophylls, carotenoids and specific lipids. as cofactor.

Its subcellular location is the cellular thylakoid membrane. It catalyses the reaction 2 a plastoquinone + 4 hnu + 2 H2O = 2 a plastoquinol + O2. Its function is as follows. Photosystem II (PSII) is a light-driven water:plastoquinone oxidoreductase that uses light energy to abstract electrons from H(2)O, generating O(2) and a proton gradient subsequently used for ATP formation. It consists of a core antenna complex that captures photons, and an electron transfer chain that converts photonic excitation into a charge separation. The D1/D2 (PsbA/PsbD) reaction center heterodimer binds P680, the primary electron donor of PSII as well as several subsequent electron acceptors. D2 is needed for assembly of a stable PSII complex. The chain is Photosystem II D2 protein from Nostoc punctiforme (strain ATCC 29133 / PCC 73102).